The primary structure comprises 108 residues: Small ribosomal subunit protein eS25A (108 aa).

Over residues 1-20 (MPPKQQLSKAAKAAAALAGG) the composition is skewed to low complexity. The disordered stretch occupies residues 1–30 (MPPKQQLSKAAKAAAALAGGKKSKKKWSKK). Proline 2 is modified (n,N-dimethylproline; by NTM1). Positions 21-30 (KKSKKKWSKK) are enriched in basic residues.

Belongs to the eukaryotic ribosomal protein eS25 family. In terms of assembly, component of the small ribosomal subunit (SSU). Mature yeast ribosomes consist of a small (40S) and a large (60S) subunit. The 40S small subunit contains 1 molecule of ribosomal RNA (18S rRNA) and 33 different proteins (encoded by 57 genes). The large 60S subunit contains 3 rRNA molecules (25S, 5.8S and 5S rRNA) and 46 different proteins (encoded by 81 genes).

The protein resides in the cytoplasm. Functionally, component of the ribosome, a large ribonucleoprotein complex responsible for the synthesis of proteins in the cell. The small ribosomal subunit (SSU) binds messenger RNAs (mRNAs) and translates the encoded message by selecting cognate aminoacyl-transfer RNA (tRNA) molecules. The large subunit (LSU) contains the ribosomal catalytic site termed the peptidyl transferase center (PTC), which catalyzes the formation of peptide bonds, thereby polymerizing the amino acids delivered by tRNAs into a polypeptide chain. The nascent polypeptides leave the ribosome through a tunnel in the LSU and interact with protein factors that function in enzymatic processing, targeting, and the membrane insertion of nascent chains at the exit of the ribosomal tunnel. This is Small ribosomal subunit protein eS25A from Saccharomyces cerevisiae (strain ATCC 204508 / S288c) (Baker's yeast).